The primary structure comprises 163 residues: Interleukin-31 (163 aa).

An N-terminal signal peptide occupies residues 1–23 (MIFHTGTTKPTLVLLCCIGTWLA). N-linked (GlcNAc...) asparagine glycans are attached at residues Asn55, Asn84, and Asn124.

The protein resides in the secreted. Functionally, activates STAT3 and possibly STAT1 and STAT5 through the IL31 heterodimeric receptor composed of IL31RA and OSMR. May function in skin immunity. Enhances myeloid progenitor cell survival in vitro. Induces RETNLA and serum amyloid A protein expression in macrophages. The protein is Interleukin-31 (Il31) of Mus musculus (Mouse).